Reading from the N-terminus, the 260-residue chain is 3'-5' ssDNA/RNA exonuclease TatD (260 aa).

A divalent metal cation is bound by residues glutamate 92, histidine 128, and histidine 153.

Belongs to the metallo-dependent hydrolases superfamily. TatD-type hydrolase family. TatD subfamily. In terms of assembly, monomer. Requires Mg(2+) as cofactor.

The protein localises to the cytoplasm. 3'-5' exonuclease that prefers single-stranded DNA and RNA. May play a role in the H(2)O(2)-induced DNA damage repair. The protein is 3'-5' ssDNA/RNA exonuclease TatD of Pectobacterium carotovorum subsp. carotovorum (strain PC1).